A 24-amino-acid chain; its full sequence is Arginine attenuator peptide (24 aa).

Belongs to the arginine attenuator peptide family.

Arginine attenuator peptide (AAP) that has a regulatory role in the production of arginine-specific carbamoyl phosphate synthetase. Encoded by an upstream open reading frame (uORF) within the 5'-leader region of arginine-specific carbamoyl phosphate synthetase small chain (arg-2) mRNA, it attenuates the translation of the downstream arg-2 ORF. In the presence of high concentrations of arginine, ribosomes translating the uORF encoding AAP stall at the termination codon, resulting in reduced translation from the downstream arg-2 initiation codon. The sequence is that of Arginine attenuator peptide from Neurospora crassa (strain ATCC 24698 / 74-OR23-1A / CBS 708.71 / DSM 1257 / FGSC 987).